A 216-amino-acid polypeptide reads, in one-letter code: Imidazole glycerol phosphate synthase subunit HisH (216 aa).

Residues 2 to 216 (SVAIVDYGSG…LISNFLKWKP (215 aa)) enclose the Glutamine amidotransferase type-1 domain. C88 acts as the Nucleophile in catalysis. Catalysis depends on residues H196 and E198.

As to quaternary structure, heterodimer of HisH and HisF.

The protein localises to the cytoplasm. It carries out the reaction 5-[(5-phospho-1-deoxy-D-ribulos-1-ylimino)methylamino]-1-(5-phospho-beta-D-ribosyl)imidazole-4-carboxamide + L-glutamine = D-erythro-1-(imidazol-4-yl)glycerol 3-phosphate + 5-amino-1-(5-phospho-beta-D-ribosyl)imidazole-4-carboxamide + L-glutamate + H(+). The enzyme catalyses L-glutamine + H2O = L-glutamate + NH4(+). It participates in amino-acid biosynthesis; L-histidine biosynthesis; L-histidine from 5-phospho-alpha-D-ribose 1-diphosphate: step 5/9. Its function is as follows. IGPS catalyzes the conversion of PRFAR and glutamine to IGP, AICAR and glutamate. The HisH subunit catalyzes the hydrolysis of glutamine to glutamate and ammonia as part of the synthesis of IGP and AICAR. The resulting ammonia molecule is channeled to the active site of HisF. This chain is Imidazole glycerol phosphate synthase subunit HisH, found in Rhodopseudomonas palustris (strain ATCC BAA-98 / CGA009).